A 347-amino-acid chain; its full sequence is S-adenosylmethionine:tRNA ribosyltransferase-isomerase (347 aa).

The protein belongs to the QueA family. In terms of assembly, monomer.

Its subcellular location is the cytoplasm. It catalyses the reaction 7-aminomethyl-7-carbaguanosine(34) in tRNA + S-adenosyl-L-methionine = epoxyqueuosine(34) in tRNA + adenine + L-methionine + 2 H(+). Its pathway is tRNA modification; tRNA-queuosine biosynthesis. Transfers and isomerizes the ribose moiety from AdoMet to the 7-aminomethyl group of 7-deazaguanine (preQ1-tRNA) to give epoxyqueuosine (oQ-tRNA). This Pseudomonas paraeruginosa (strain DSM 24068 / PA7) (Pseudomonas aeruginosa (strain PA7)) protein is S-adenosylmethionine:tRNA ribosyltransferase-isomerase.